The following is a 321-amino-acid chain: Methionyl-tRNA formyltransferase (321 aa).

Residue 112–115 (SILP) coordinates (6S)-5,6,7,8-tetrahydrofolate.

The protein belongs to the Fmt family.

It carries out the reaction L-methionyl-tRNA(fMet) + (6R)-10-formyltetrahydrofolate = N-formyl-L-methionyl-tRNA(fMet) + (6S)-5,6,7,8-tetrahydrofolate + H(+). Attaches a formyl group to the free amino group of methionyl-tRNA(fMet). The formyl group appears to play a dual role in the initiator identity of N-formylmethionyl-tRNA by promoting its recognition by IF2 and preventing the misappropriation of this tRNA by the elongation apparatus. The chain is Methionyl-tRNA formyltransferase from Shewanella pealeana (strain ATCC 700345 / ANG-SQ1).